A 187-amino-acid polypeptide reads, in one-letter code: Large ribosomal subunit protein uL5 (187 aa).

Belongs to the universal ribosomal protein uL5 family. As to quaternary structure, part of the 50S ribosomal subunit; part of the 5S rRNA/L5/L18/L25 subcomplex. Contacts the 5S rRNA and the P site tRNA. Forms a bridge to the 30S subunit in the 70S ribosome.

This is one of the proteins that bind and probably mediate the attachment of the 5S RNA into the large ribosomal subunit, where it forms part of the central protuberance. In the 70S ribosome it contacts protein S13 of the 30S subunit (bridge B1b), connecting the 2 subunits; this bridge is implicated in subunit movement. Contacts the P site tRNA; the 5S rRNA and some of its associated proteins might help stabilize positioning of ribosome-bound tRNAs. This is Large ribosomal subunit protein uL5 from Saccharopolyspora erythraea (strain ATCC 11635 / DSM 40517 / JCM 4748 / NBRC 13426 / NCIMB 8594 / NRRL 2338).